The sequence spans 473 residues: H(+)/Cl(-) exchange transporter ClcA (473 aa).

Over 1-32 (MKTDTSTFLAQQIVRLRRRDQIRRLMQRDKTP) the chain is Cytoplasmic. Residues 33–69 (LAILFMAAVVGTLTGLVGVAFEKTVSWVQNMRIGALV) form a helical membrane-spanning segment. Residues 70–76 (QVADHAF) lie on the Periplasmic side of the membrane. The helical transmembrane segment at 77 to 100 (LLWPLAFILSALLAMVGYFLVRKF) threads the bilayer. The short motif at 106 to 110 (GSGIP) is the Selectivity filter part_1 element. Residue Ser107 coordinates chloride. An intramembrane region (helical) is located at residues 109–116 (IPEIEGAL). At 117 to 123 (EELRPVR) the chain is on the cytoplasmic side. The next 2 membrane-spanning stretches (helical) occupy residues 124 to 141 (WWRV…TLGA) and 148 to 166 (EGPT…LDVF). Residues 146–150 (GREGP) carry the Selectivity filter part_2 motif. Over 167–176 (RMRSAEARHT) the chain is Cytoplasmic. 2 consecutive intramembrane regions (helical) follow at residues 177 to 189 (LLAT…LSAA) and 193 to 201 (PLAGILFII). Topologically, residues 202 to 214 (EEMRPQFRYNLIS) are cytoplasmic. A helical transmembrane segment spans residues 215-232 (IKAVFTGVIMSSIVFRIF). Topologically, residues 233-252 (NGEAPIIEVGKLSDAPVNTL) are periplasmic. Residues 253–281 (WLYLILGIIFGCVGPVFNSLVLRTQDMFQ) traverse the membrane as a helical segment. Over 282 to 287 (RFHGGE) the chain is Cytoplasmic. A helical membrane pass occupies residues 288–309 (IKKWVLMGGAIGGLCGILGLIE). The Periplasmic segment spans residues 310 to 329 (PAAAGGGFNLIPIAAAGNFS). The next 2 helical transmembrane spans lie at 330 to 349 (VGLL…LCFS) and 355 to 376 (GIFA…MAAA). Positions 355–359 (GIFAP) match the Selectivity filter part_3 motif. Positions 356 and 357 each coordinate chloride. The Periplasmic portion of the chain corresponds to 377 to 386 (VLFPQYHPEA). The helical intramembrane region spans 387-401 (GTFAIAGMGALMAAS). The note=Loop between two helices intramembrane region spans 402–404 (VRA). An intramembrane region (helical) is located at residues 405–416 (PLTGIVLVLEMT). Residues 417-421 (DNYQL) constitute an intramembrane region (note=Loop between two helices). The chain crosses the membrane as a helical span at residues 422 to 438 (ILPMIITCLGATLLAQF). Topologically, residues 439-473 (LGGKPLYSTILARTLAKQDAEQAAKNQNAPAGENT) are cytoplasmic. A chloride-binding site is contributed by Tyr445.

The protein belongs to the chloride channel (TC 2.A.49) family. ClcA subfamily. As to quaternary structure, homodimer.

It is found in the cell inner membrane. The catalysed reaction is 2 chloride(in) + H(+)(out) = 2 chloride(out) + H(+)(in). In terms of biological role, proton-coupled chloride transporter. Functions as antiport system and exchanges two chloride ions for 1 proton. Probably acts as an electrical shunt for an outwardly-directed proton pump that is linked to amino acid decarboxylation, as part of the extreme acid resistance (XAR) response. This chain is H(+)/Cl(-) exchange transporter ClcA, found in Salmonella paratyphi A (strain AKU_12601).